A 315-amino-acid chain; its full sequence is Ribonuclease Z (315 aa).

Residues histidine 62, histidine 64, aspartate 66, histidine 67, histidine 144, aspartate 215, and histidine 273 each coordinate Zn(2+). The Proton acceptor role is filled by aspartate 66.

Belongs to the RNase Z family. In terms of assembly, homodimer. The cofactor is Zn(2+).

It catalyses the reaction Endonucleolytic cleavage of RNA, removing extra 3' nucleotides from tRNA precursor, generating 3' termini of tRNAs. A 3'-hydroxy group is left at the tRNA terminus and a 5'-phosphoryl group is left at the trailer molecule.. Its function is as follows. Zinc phosphodiesterase, which displays some tRNA 3'-processing endonuclease activity. Probably involved in tRNA maturation, by removing a 3'-trailer from precursor tRNA. The protein is Ribonuclease Z of Synechococcus sp. (strain CC9311).